The primary structure comprises 381 residues: L-lactate dehydrogenase (381 aa).

Positions 1 to 380 (MIISASTDYR…TRDSLVRELG (380 aa)) constitute an FMN hydroxy acid dehydrogenase domain. Tyr-24 contributes to the substrate binding site. Positions 106 and 127 each coordinate FMN. Tyr-129 contributes to the substrate binding site. Thr-155 provides a ligand contact to FMN. Position 164 (Arg-164) interacts with substrate. Lys-251 provides a ligand contact to FMN. His-275 (proton acceptor) is an active-site residue. Arg-278 is a substrate binding site. 306 to 330 (DSGIRSGLDVVRMIALGADTVLIGR) contributes to the FMN binding site.

It belongs to the FMN-dependent alpha-hydroxy acid dehydrogenase family. Homotetramer. It depends on FMN as a cofactor.

Its subcellular location is the cell inner membrane. It catalyses the reaction (S)-lactate + A = pyruvate + AH2. Catalyzes the conversion of L-lactate to pyruvate. Is coupled to the respiratory chain. The chain is L-lactate dehydrogenase from Pseudomonas putida (strain GB-1).